The primary structure comprises 534 residues: Ankyrin repeat domain-containing protein 34C (534 aa).

ANK repeat units lie at residues 10-39, 43-80, 84-114, and 118-147; these read TDGN…YINE, KGET…DPNI, SGKT…DPSL, and TGAS…AKGK. The tract at residues 159–205 is disordered; sequence SGTKTTKQYLNVPPSPKVEDRQSPPLCTTPSDVELKTSGLASPPSEK. A Phosphoserine modification is found at Ser-301. Disordered regions lie at residues 332-368 and 384-403; these read YEKG…LKDP and QPVG…GPLD. At Ser-446 the chain carries Phosphoserine. The disordered stretch occupies residues 480–503; sequence SKPASPLASGLKSMAPVAPNSPKR.

Belongs to the ANKRD34 family.

In Mus musculus (Mouse), this protein is Ankyrin repeat domain-containing protein 34C (Ankrd34c).